The following is a 432-amino-acid chain: MSYSRSMYSSSSVVGGSPYRSLSSAPRFAPGSSAASVHAGPGGSGARISVSRVSSVGSGFGGGFSGGFSGVSNVSLMGGAQNEKETMQDLNDRLASYLERVRSLETANKELEVQIRQHTEKKGPAKDWSPYYKAIEDLKKQVFDSTVDNSQLVLQIDNARLAADDFRVKYEAELAIRMSVETDIGGLRKLIDDTNISRLNLENEIESLKEELIFLKKNHQDDVNELQAQIARSAVTVEVDAPKSQDLGKIMAELRAQYDGLAQKNREDVEKWYQSKVEEHTMQVNIDTQELQTSKNSVTELRRTMQSLEIELESLRNQKASLEGTLHDTEARYAMELEMLGGTAMARESELVQVRSDCQRQQQEYQALLNTKMKLEAEIHTYRRLLEGDSFDLQDAVPTVTTQTVKKVITTTQRIVDGKVVAESNDTEVLKA.

The span at 1–21 (MSYSRSMYSSSSVVGGSPYRS) shows a compositional bias: low complexity. The interval 1–44 (MSYSRSMYSSSSVVGGSPYRSLSSAPRFAPGSSAASVHAGPGGS) is disordered. Positions 2-82 (SYSRSMYSSS…NVSLMGGAQN (81 aa)) are head. Residues 83–118 (EKETMQDLNDRLASYLERVRSLETANKELEVQIRQH) are coil 1A. The IF rod domain occupies 83 to 393 (EKETMQDLND…RLLEGDSFDL (311 aa)). Positions 119 to 134 (TEKKGPAKDWSPYYKA) are linker 1. The tract at residues 135–226 (IEDLKKQVFD…KNHQDDVNEL (92 aa)) is coil 1B. The tract at residues 227–250 (QAQIARSAVTVEVDAPKSQDLGKI) is linker 12. The segment at 251–388 (MAELRAQYDG…IHTYRRLLEG (138 aa)) is coil 2. The tract at residues 389-432 (DSFDLQDAVPTVTTQTVKKVITTTQRIVDGKVVAESNDTEVLKA) is tail.

It belongs to the intermediate filament family. As to quaternary structure, heterotetramer of two type I and two type II keratins. Keratin-18 associates with keratin-8. Post-translationally, phosphorylated. Proteolytically cleaved by caspases during epithelial cell apoptosis.

In terms of biological role, when phosphorylated, plays a role in filament reorganization. The sequence is that of Keratin, type I cytoskeletal 18-B (krt18-b) from Xenopus laevis (African clawed frog).